Here is a 365-residue protein sequence, read N- to C-terminus: DNA replication and repair protein RecF (365 aa).

23-30 (GPNGIGKS) contacts ATP.

Belongs to the RecF family.

Its subcellular location is the cytoplasm. Functionally, the RecF protein is involved in DNA metabolism; it is required for DNA replication and normal SOS inducibility. RecF binds preferentially to single-stranded, linear DNA. It also seems to bind ATP. The protein is DNA replication and repair protein RecF of Parasynechococcus marenigrum (strain WH8102).